The sequence spans 518 residues: GMP synthase [glutamine-hydrolyzing] (518 aa).

One can recognise a Glutamine amidotransferase type-1 domain in the interval 6–200; it reads RLLIIDFGSQ…FVRLAGFKGD (195 aa). The Nucleophile role is filled by C84. Active-site residues include H175 and E177. The 193-residue stretch at 201-393 folds into the GMPS ATP-PPase domain; that stretch reads WTMGAYREEA…LGLPESFIGR (193 aa). 228–234 lines the ATP pocket; it reads SGGVDSS.

In terms of assembly, homodimer.

The enzyme catalyses XMP + L-glutamine + ATP + H2O = GMP + L-glutamate + AMP + diphosphate + 2 H(+). The protein operates within purine metabolism; GMP biosynthesis; GMP from XMP (L-Gln route): step 1/1. Catalyzes the synthesis of GMP from XMP. This chain is GMP synthase [glutamine-hydrolyzing], found in Cereibacter sphaeroides (strain ATCC 17029 / ATH 2.4.9) (Rhodobacter sphaeroides).